We begin with the raw amino-acid sequence, 180 residues long: Oligoribonuclease (180 aa).

Residues leucine 7–leucine 170 form the Exonuclease domain. Residue tyrosine 128 is part of the active site.

This sequence belongs to the oligoribonuclease family.

It localises to the cytoplasm. 3'-to-5' exoribonuclease specific for small oligoribonucleotides. This chain is Oligoribonuclease, found in Pectobacterium atrosepticum (strain SCRI 1043 / ATCC BAA-672) (Erwinia carotovora subsp. atroseptica).